A 303-amino-acid polypeptide reads, in one-letter code: Major fimbrium anchoring subunit FimB (303 aa).

Positions 1-22 (MNDAKKYIVSVLILLVAGMFGG) are cleaved as a signal peptide. A lipid anchor (N-palmitoyl cysteine) is attached at Cys23. Cys23 carries S-diacylglycerol cysteine lipidation.

The protein belongs to the bacteroidetes fimbrillin superfamily. FimB/Mfa2 family. FimB is not part of the fimbrium itself, but anchors the fimbrium in the outer membrane. Linear, head-to-tail oligomerization of fimbrial subunits mediates assembly of the fimbrium stalk, while the minor components FimC, FimD and FimE probably form the fimbrium tip. The anchoring subunit FimB limits fimbrium length and is important for solid fimbrium attachment to the outer membrane. In its absence, the major fimbriae become very long and are easily detached from the membrane.

The protein resides in the cell outer membrane. In terms of biological role, anchoring subunit of the major fimbriae. Regulates fimbrial length. These filamentous pili are attached to the cell surface; they mediate biofilm formation, adhesion onto host cells and onto other bacteria that are part of the oral microbiome. Fimbriae of P.gingivalis are major virulence factors. The sequence is that of Major fimbrium anchoring subunit FimB from Porphyromonas gingivalis (strain ATCC 33277 / DSM 20709 / CIP 103683 / JCM 12257 / NCTC 11834 / 2561).